We begin with the raw amino-acid sequence, 111 residues long: TKKMSEILKAEDIDKALNTFKEAGSFDHHKFFNLVGLKGKPDDTLKEVFGILDQDKSGYIEEEELKFVLKGFAAGGRELTANETKALLKAGDQDGDDKIGVDEFTNLVKAA.

Threonine 1 is modified (N-acetylthreonine; in form C2). EF-hand domains are found at residues 40-75 and 79-111; these read KPDD…FAAG and LTAN…VKAA. Ca(2+)-binding residues include aspartate 53, aspartate 55, serine 57, tyrosine 59, glutamate 61, glutamate 64, aspartate 92, aspartate 94, aspartate 96, lysine 98, and glutamate 103.

It belongs to the parvalbumin family. Acetylation of Thr-1 converts C1 to C2.

Its function is as follows. In muscle, parvalbumin is thought to be involved in relaxation after contraction. It binds two calcium ions. The polypeptide is Parvalbumin alpha (Latimeria chalumnae (Coelacanth)).